The primary structure comprises 470 residues: 3-isopropylmalate dehydratase large subunit (470 aa).

[4Fe-4S] cluster-binding residues include C351, C411, and C414.

This sequence belongs to the aconitase/IPM isomerase family. LeuC type 1 subfamily. Heterodimer of LeuC and LeuD. Requires [4Fe-4S] cluster as cofactor.

It catalyses the reaction (2R,3S)-3-isopropylmalate = (2S)-2-isopropylmalate. It functions in the pathway amino-acid biosynthesis; L-leucine biosynthesis; L-leucine from 3-methyl-2-oxobutanoate: step 2/4. Functionally, catalyzes the isomerization between 2-isopropylmalate and 3-isopropylmalate, via the formation of 2-isopropylmaleate. The chain is 3-isopropylmalate dehydratase large subunit from Rhodopseudomonas palustris (strain BisB5).